Here is a 125-residue protein sequence, read N- to C-terminus: MQTPLATPVPVLRLPRGPDGSNRGFAPDGRRAPPKPEVPEPPESRESWEQQARASLRERYLRSLLAMVGRPVCFTLHEGVQVIAHFGATDLDVANFYVSQLQTPIGIQAEALLRCSDIISYTFKP.

Residue Met1 is modified to N-acetylmethionine. Residues Met1–Gly29 form the SUZ-C domain. A disordered region spans residues Met1–Ala52. A Phosphothreonine modification is found at Thr3. The Sm domain maps to Arg59–Pro125.

The protein belongs to the gemin-7 family. Part of the core SMN complex that contains SMN1, GEMIN2/SIP1, DDX20/GEMIN3, GEMIN4, GEMIN5, GEMIN6, GEMIN7, GEMIN8 and STRAP/UNRIP. Part of the SMN-Sm complex that contains SMN1, GEMIN2/SIP1, DDX20/GEMIN3, GEMIN4, GEMIN5, GEMIN6, GEMIN7, GEMIN8, STRAP/UNRIP and the Sm proteins SNRPB, SNRPD1, SNRPD2, SNRPD3, SNRPE, SNRPF and SNRPG. Interacts with GEMIN6; the interaction is direct. Interacts with STRAP/UNRIP; the interaction is direct. Interacts with GEMIN8; the interaction is direct. Interacts with SNRPB, SNRPD2, SNRPD3 and SNRPE; the interaction is direct.

Its subcellular location is the nucleus. It localises to the nucleoplasm. It is found in the gem. The protein resides in the cytoplasm. In terms of biological role, the SMN complex catalyzes the assembly of small nuclear ribonucleoproteins (snRNPs), the building blocks of the spliceosome, and thereby plays an important role in the splicing of cellular pre-mRNAs. Most spliceosomal snRNPs contain a common set of Sm proteins SNRPB, SNRPD1, SNRPD2, SNRPD3, SNRPE, SNRPF and SNRPG that assemble in a heptameric protein ring on the Sm site of the small nuclear RNA to form the core snRNP (Sm core). In the cytosol, the Sm proteins SNRPD1, SNRPD2, SNRPE, SNRPF and SNRPG are trapped in an inactive 6S pICln-Sm complex by the chaperone CLNS1A that controls the assembly of the core snRNP. To assemble core snRNPs, the SMN complex accepts the trapped 5Sm proteins from CLNS1A forming an intermediate. Binding of snRNA inside 5Sm triggers eviction of the SMN complex, thereby allowing binding of SNRPD3 and SNRPB to complete assembly of the core snRNP. In Bos taurus (Bovine), this protein is Gem-associated protein 7 (GEMIN7).